We begin with the raw amino-acid sequence, 418 residues long: MSWPQVQPEVNIGVVGHVDHGKTTLVQAITGVWTSKHSEELKRGMTIKLGYAEASIGVCPNCNKPEAYVTEYSCNQCGSDEKPQFLRKVSFIDAPGHEILMATMLSGAALMDGALLVVAANEPFPQPQTREHFVALGIVNIKNLIIVQNKVDVVSKEEALKQYKQIKEFLKGTWAEDAPIIPVSALHKINIDALIEGIQKYIPTPQRDLSKDPIMLVIRSFDVNKPGTPYNELKGGVIGGSIIQGKLEIGDEIKILPGLRHEKPGGKVEYEPLYTTITSIRFSDLEVKEAKPGGLVALGTELDPSYVKADSLVGSVVVKSSNKNVSVLWNLKIENYQLLERVVGAKELVKVENIKKGEVLMLTLGSATTLGVAKNIKNDELEVELKRPLVVWDKDLRVVISRQVSGRWRLVGWGIIKI.

Positions 7-206 (QPEVNIGVVG…GIQKYIPTPQ (200 aa)) constitute a tr-type G domain. The tract at residues 16–23 (GHVDHGKT) is G1. D19, T23, G44, and T46 together coordinate Mg(2+). Position 19-24 (19-24 (DHGKTT)) interacts with GTP. The tract at residues 44 to 48 (GMTIK) is G2. Residues C59, C62, C74, and C77 each coordinate Zn(2+). The interval 93–96 (DAPG) is G3. GTP contacts are provided by residues 149–152 (NKVD) and 184–186 (SAL). The interval 149 to 152 (NKVD) is G4. A G5 region spans residues 184–186 (SAL).

This sequence belongs to the TRAFAC class translation factor GTPase superfamily. Classic translation factor GTPase family. EIF2G subfamily. Heterotrimer composed of an alpha, a beta and a gamma chain. Requires Mg(2+) as cofactor.

It catalyses the reaction GTP + H2O = GDP + phosphate + H(+). In terms of biological role, eIF-2 functions in the early steps of protein synthesis by forming a ternary complex with GTP and initiator tRNA. The chain is Translation initiation factor 2 subunit gamma from Sulfurisphaera tokodaii (strain DSM 16993 / JCM 10545 / NBRC 100140 / 7) (Sulfolobus tokodaii).